Here is a 178-residue protein sequence, read N- to C-terminus: Adenine phosphoribosyltransferase (178 aa).

It belongs to the purine/pyrimidine phosphoribosyltransferase family. In terms of assembly, homodimer.

It localises to the cytoplasm. It carries out the reaction AMP + diphosphate = 5-phospho-alpha-D-ribose 1-diphosphate + adenine. It functions in the pathway purine metabolism; AMP biosynthesis via salvage pathway; AMP from adenine: step 1/1. Catalyzes a salvage reaction resulting in the formation of AMP, that is energically less costly than de novo synthesis. This chain is Adenine phosphoribosyltransferase, found in Streptomyces clavuligerus.